The following is a 345-amino-acid chain: Phosphoribosylformylglycinamidine cyclo-ligase (345 aa).

Belongs to the AIR synthase family.

It localises to the cytoplasm. It catalyses the reaction 2-formamido-N(1)-(5-O-phospho-beta-D-ribosyl)acetamidine + ATP = 5-amino-1-(5-phospho-beta-D-ribosyl)imidazole + ADP + phosphate + H(+). It participates in purine metabolism; IMP biosynthesis via de novo pathway; 5-amino-1-(5-phospho-D-ribosyl)imidazole from N(2)-formyl-N(1)-(5-phospho-D-ribosyl)glycinamide: step 2/2. This chain is Phosphoribosylformylglycinamidine cyclo-ligase, found in Lactobacillus acidophilus (strain ATCC 700396 / NCK56 / N2 / NCFM).